The following is a 222-amino-acid chain: Eukaryotic translation initiation factor 4E-2 (222 aa).

Residues 1 to 20 (MVDEVEKPVSLEESKTNTRE) show a composition bias toward basic and acidic residues. The tract at residues 1–35 (MVDEVEKPVSLEESKTNTREVEEEGEIVGESDDTM) is disordered. Residues 21–33 (VEEEGEIVGESDD) are compositionally biased toward acidic residues. EIF4G-binding regions lie at residues 47–50 (HALE) and 57–93 (FDNPSGKSKQAAWGSSIRPIYTFSTVEDFWSVYNNIH). MRNA contacts are provided by residues 65–70 (KQAAWG), lysine 97, and 115–116 (WE). A disulfide bridge connects residues cysteine 120 and cysteine 158. Positions 141–150 (YTLLAMIGEQ) are EIF4G-binding. Residues 165-170 (RVRQEK) and 210-214 (KKLDR) each bind mRNA.

The protein belongs to the eukaryotic initiation factor 4E family. EIF4F is a multi-subunit complex, the composition of which varies with external and internal environmental conditions. It is composed of at least EIF4A, EIF4E and EIF4G. EIF4E is also known to interact with other partners. In higher plants two isoforms of EIF4F have been identified, named isoform EIF4F and isoform EIF(iso)4F. Isoform EIF4F has subunits p220 and p26, whereas isoform EIF(iso)4F has subunits p82 and p28. In terms of assembly, (Microbial infection) Interacts with potyvirus viral genome-linked protein (VPg); this interaction is possible in susceptible hosts but impaired in resistant plants. According to the redox status, the Cys-120-Cys-158 disulfide bridge may have a role in regulating protein function by affecting its ability to bind capped mRNA. In terms of tissue distribution, strongly expressed in susceptible plants but not in resistant ones.

Its subcellular location is the nucleus. The protein localises to the cytoplasm. Functionally, component of the protein complex eIF4F, which is involved in the recognition of the mRNA cap, ATP-dependent unwinding of 5'-terminal secondary structure and recruitment of mRNA to the ribosome. Recognizes and binds the 7-methylguanosine-containing mRNA cap during an early step in the initiation of protein synthesis and facilitates ribosome binding by inducing the unwinding of the mRNAs secondary structures. Key component of recessive resistance to potyviruses. Its function is as follows. (Microbial infection) Susceptibility host factor required for viral infection (e.g. potato virus Y (PVY) and pepper mottle virus (PepMoV)) by recruiting viral RNAs to the host ribosomal complex via an interaction with viral genome-linked protein (VPg). The polypeptide is Eukaryotic translation initiation factor 4E-2 (Nicotiana tabacum (Common tobacco)).